The following is a 305-amino-acid chain: Beta-lactamase (305 aa).

The tat-type signal signal peptide spans 1–34; that stretch reads MGTTGARPSRRAVLTAAAGAAVAGIPLGGSTAFA. Residue serine 82 is the Acyl-ester intermediate of the active site. A substrate-binding site is contributed by 250–252; the sequence is KTG.

Belongs to the class-A beta-lactamase family. Post-translationally, predicted to be exported by the Tat system. The position of the signal peptide cleavage has not been experimentally proven.

It catalyses the reaction a beta-lactam + H2O = a substituted beta-amino acid. The polypeptide is Beta-lactamase (Streptomyces lavendulae).